A 540-amino-acid chain; its full sequence is Zona pellucida sperm-binding protein 4 (540 aa).

The N-terminal stretch at 1 to 18 is a signal peptide; that stretch reads MWLLRCVLLCVSLSLAVS. Residues 19 to 505 are Extracellular-facing; it reads GQHKPEAPDY…EKLRVPVDSK (487 aa). N-linked (GlcNAc...) asparagine glycosylation is present at Asn-69. Residues 141-183 enclose the P-type domain; it reads DWCDSIPARDRLPCAPSPISRGDCEGLGCCYSSEEVNSCYYGN. The region spanning 188-466 is the ZP domain; the sequence is HCTREGHFSI…VTCPDLSRRR (279 aa). Residues Asn-202, Asn-219, and Asn-267 are each glycosylated (N-linked (GlcNAc...) asparagine). A glycan (O-linked (GalNAc...) threonine) is linked at Thr-302. Cys-367 and Cys-442 form a disulfide bridge. Positions 463–540 are cleaved as a propeptide — removed in mature form; it reads SRRRNFDNSS…QKSCPDQMCQ (78 aa). Residues Asn-470 and Asn-474 are each glycosylated (N-linked (GlcNAc...) asparagine). A helical membrane pass occupies residues 506 to 526; sequence VLWVAGLSGTLILGALLVSYL. Residues 527-540 lie on the Cytoplasmic side of the membrane; that stretch reads AVKKQKSCPDQMCQ.

This sequence belongs to the ZP domain family. ZPB subfamily. Proteolytically cleaved before the transmembrane segment to yield the secreted ectodomain incorporated in the zona pellucida. In terms of tissue distribution, expressed in oocytes.

It is found in the zona pellucida. Its subcellular location is the cell membrane. Its function is as follows. Component of the zona pellucida, an extracellular matrix surrounding oocytes which mediates sperm binding, induction of the acrosome reaction and prevents post-fertilization polyspermy. The zona pellucida is composed of 3 to 4 glycoproteins, ZP1, ZP2, ZP3, and ZP4. ZP4 may act as a sperm receptor. This Homo sapiens (Human) protein is Zona pellucida sperm-binding protein 4 (ZP4).